We begin with the raw amino-acid sequence, 327 residues long: Polyprenyl transferase esdpC (327 aa).

The next 8 membrane-spanning stretches (helical) occupy residues 35 to 54 (YNPL…AGAS), 73 to 93 (LLVF…NDWI), 118 to 138 (EALI…AYTL), 140 to 160 (GHNV…YPFG), 171 to 191 (YPQY…WLAI), 202 to 222 (IMES…LNTA), 239 to 259 (VYFL…ALVL), and 307 to 327 (ENFA…LLKS).

Belongs to the UbiA prenyltransferase family. It depends on Mg(2+) as a cofactor.

It is found in the membrane. It participates in secondary metabolite biosynthesis; terpenoid biosynthesis. Its function is as follows. olyprenyl transferase; part of the cluster that mediates the biosynthesis of shearones, diterpenoid pyrones (DPs) which are structurally diverse meroterpenoids consisting of a diterpene linked by a pyrone, and which may exhibit a range of bioactivities. Within the pathway, esdpC takes part to the biosynthesis of the molecular scaffold by catalyzing the C-3 geranylgeranylation reaction of the alpha-pyrone produced by esdpA. The molecular scaffold is commonly biosynthesized by a series of enzymes including the non-reducing polyketide synthase (NR-PKS) esdpA that generates an alpha-pyrone; the prenyltransferase esdpC that attaches a geranylgeranyl pyrophosphate (GGPP) produced by the GGPP synthase (GGPPS) esdpD onto the pyrone unit; the FAD-dependent monooxygenase esdpE that converts an olefin on the diterpene unit into an epoxide; and the terpene cyclase esdpB that catalyzes the cyclization reactions to give the molecular backbone shearone A. In the modification steps, esdpF oxidizes the hydroxy group to a ketone at C-3 and esdpG then attaches hydroxy groups at both C-11 and C-12. After that, esdpI hydroxylates at C-20 and esdpH hydroxylates at C-6'. The ether bridge is generated by nucleophilic attack of the hydroxy group at C-20 to the carbonyl carbon at C-3. EsdpH can also functions prior to esdpI. The different combinations of these modification enzymes lead to the production of diverse shearone derivatives, shearone I being the end product of the pathway. The alpha-ketoglutarate-dependent dioxygenase esdpJ seems not to be involved in this pathway. This is Polyprenyl transferase esdpC from Penicillium shearii (Eupenicillium shearii).